A 155-amino-acid polypeptide reads, in one-letter code: Ribonuclease H (155 aa).

The 142-residue stretch at 4–145 folds into the RNase H type-1 domain; sequence QQKVVEIYTD…ADALARKAIT (142 aa). Positions 13, 51, 73, and 137 each coordinate Mg(2+).

This sequence belongs to the RNase H family. In terms of assembly, monomer. Mg(2+) is required as a cofactor.

Its subcellular location is the cytoplasm. It carries out the reaction Endonucleolytic cleavage to 5'-phosphomonoester.. Functionally, endonuclease that specifically degrades the RNA of RNA-DNA hybrids. The protein is Ribonuclease H of Bartonella quintana (strain Toulouse) (Rochalimaea quintana).